Reading from the N-terminus, the 447-residue chain is Folate synthesis bifunctional protein (447 aa).

An HPPK region spans residues 1–165; the sequence is MTTAQFICLS…SFGEIAHLLP (165 aa). The 260-residue stretch at 179 to 438 folds into the Pterin-binding domain; sequence TLLMGVVNVT…DVEANQRVLS (260 aa). The DHPS stretch occupies residues 181-447; the sequence is LMGVVNVTDN…SAAAWSGVHV (267 aa). N186 provides a ligand contact to Mg(2+). (7,8-dihydropterin-6-yl)methyl diphosphate is bound by residues T226, D266, N286, D356, K392, and 426 to 428; that span reads RVH.

The protein in the C-terminal section; belongs to the DHPS family. It in the N-terminal section; belongs to the HPPK family. Mg(2+) is required as a cofactor.

The enzyme catalyses 6-hydroxymethyl-7,8-dihydropterin + ATP = (7,8-dihydropterin-6-yl)methyl diphosphate + AMP + H(+). It catalyses the reaction (7,8-dihydropterin-6-yl)methyl diphosphate + 4-aminobenzoate = 7,8-dihydropteroate + diphosphate. It functions in the pathway cofactor biosynthesis; tetrahydrofolate biosynthesis; 2-amino-4-hydroxy-6-hydroxymethyl-7,8-dihydropteridine diphosphate from 7,8-dihydroneopterin triphosphate: step 4/4. It participates in cofactor biosynthesis; tetrahydrofolate biosynthesis; 7,8-dihydrofolate from 2-amino-4-hydroxy-6-hydroxymethyl-7,8-dihydropteridine diphosphate and 4-aminobenzoate: step 1/2. In Chlamydia caviae (strain ATCC VR-813 / DSM 19441 / 03DC25 / GPIC) (Chlamydophila caviae), this protein is Folate synthesis bifunctional protein (folKP).